Reading from the N-terminus, the 329-residue chain is BTB/POZ domain-containing protein At1g55760 (329 aa).

Positions 164–231 (TDITINASDG…IYGNIQNEDF (68 aa)) constitute a BTB domain.

The protein operates within protein modification; protein ubiquitination. May act as a substrate-specific adapter of an E3 ubiquitin-protein ligase complex (CUL3-RBX1-BTB) which mediates the ubiquitination and subsequent proteasomal degradation of target proteins. In Arabidopsis thaliana (Mouse-ear cress), this protein is BTB/POZ domain-containing protein At1g55760.